The primary structure comprises 166 residues: Transcription antitermination protein NusB (166 aa).

The segment covering 1-18 has biased composition (basic and acidic residues); the sequence is MISDESDRFNPRDPKPAD. The disordered stretch occupies residues 1-30; sequence MISDESDRFNPRDPKPADAGKPSKSAKRRE.

This sequence belongs to the NusB family.

Its function is as follows. Involved in transcription antitermination. Required for transcription of ribosomal RNA (rRNA) genes. Binds specifically to the boxA antiterminator sequence of the ribosomal RNA (rrn) operons. The chain is Transcription antitermination protein NusB from Pseudomonas entomophila (strain L48).